The following is a 421-amino-acid chain: Dihydroorotase (421 aa).

Zn(2+) contacts are provided by histidine 60 and histidine 62. Substrate is bound by residues 62 to 64 (HFR) and asparagine 94. Aspartate 151, histidine 178, and histidine 231 together coordinate Zn(2+). Asparagine 277 is a substrate binding site. Aspartate 304 contributes to the Zn(2+) binding site. The active site involves aspartate 304. Residue histidine 308 coordinates substrate.

Belongs to the metallo-dependent hydrolases superfamily. DHOase family. Class I DHOase subfamily. Zn(2+) serves as cofactor.

The catalysed reaction is (S)-dihydroorotate + H2O = N-carbamoyl-L-aspartate + H(+). It participates in pyrimidine metabolism; UMP biosynthesis via de novo pathway; (S)-dihydroorotate from bicarbonate: step 3/3. Catalyzes the reversible cyclization of carbamoyl aspartate to dihydroorotate. This Clostridioides difficile (strain 630) (Peptoclostridium difficile) protein is Dihydroorotase.